A 652-amino-acid chain; its full sequence is UvrABC system protein C (652 aa).

Residues 37-116 (KSSGCYLFKD…IKTNKPYFNI (80 aa)) form the GIY-YIG domain. In terms of domain architecture, UVR spans 226-261 (DDLEIFLQKKMLQFSNDLDYENAAKIRDQISGLKLL).

Belongs to the UvrC family. In terms of assembly, interacts with UvrB in an incision complex.

The protein resides in the cytoplasm. In terms of biological role, the UvrABC repair system catalyzes the recognition and processing of DNA lesions. UvrC both incises the 5' and 3' sides of the lesion. The N-terminal half is responsible for the 3' incision and the C-terminal half is responsible for the 5' incision. The polypeptide is UvrABC system protein C (Prochlorococcus marinus (strain MIT 9312)).